Consider the following 84-residue polypeptide: MASSTSTSASASSSIKTNSALVSNNVVAASSVSATSTASSSAAKNTTSSSKNAAPGMVANPVSSKYGIIMAAFAAVSFVLGTGI.

Residues 34–54 are compositionally biased toward low complexity; it reads ATSTASSSAAKNTTSSSKNAA. Residues 34-57 are disordered; it reads ATSTASSSAAKNTTSSSKNAAPGM. Residue N45 is glycosylated (N-linked (GlcNAc...) asparagine). The chain crosses the membrane as a helical span at residues 66–83; it reads YGIIMAAFAAVSFVLGTG.

It is found in the endoplasmic reticulum membrane. This is an uncharacterized protein from Saccharomyces cerevisiae (strain ATCC 204508 / S288c) (Baker's yeast).